The sequence spans 638 residues: Threonine--tRNA ligase (638 aa).

Residues 1 to 61 (MPLITLPDGN…DKDCSVKIFT (61 aa)) enclose the TGS domain. Residues 243-535 (DHRKLGKEMD…LIENYAGKFP (293 aa)) are catalytic. Zn(2+) is bound by residues Cys335, His386, and His512.

This sequence belongs to the class-II aminoacyl-tRNA synthetase family. In terms of assembly, homodimer. The cofactor is Zn(2+).

Its subcellular location is the cytoplasm. It carries out the reaction tRNA(Thr) + L-threonine + ATP = L-threonyl-tRNA(Thr) + AMP + diphosphate + H(+). Its function is as follows. Catalyzes the attachment of threonine to tRNA(Thr) in a two-step reaction: L-threonine is first activated by ATP to form Thr-AMP and then transferred to the acceptor end of tRNA(Thr). Also edits incorrectly charged L-seryl-tRNA(Thr). The polypeptide is Threonine--tRNA ligase (Pelagibacter ubique (strain HTCC1062)).